We begin with the raw amino-acid sequence, 479 residues long: Zinc metalloproteinase/disintegrin PMMP-1 (479 aa).

The first 20 residues, 1-20 (MIQVLLVTICLAVFPYQGSS), serve as a signal peptide directing secretion. Positions 21 to 188 (IILESGNVND…PIKKASKLVV (168 aa)) are excised as a propeptide. The region spanning 194 to 390 (RYVELVIVAD…HNPQCILNKP (197 aa)) is the Peptidase M12B domain. Cystine bridges form between cysteine 305–cysteine 385, cysteine 345–cysteine 369, and cysteine 347–cysteine 352. Histidine 330 is a binding site for Zn(2+). Residue glutamate 331 is part of the active site. Histidine 334 and histidine 339 together coordinate Zn(2+). The N-linked (GlcNAc...) asparagine glycan is linked to asparagine 368. A propeptide spanning residues 391 to 408 (LRTDTVSTPVSGNELLEA) is cleaved from the precursor. The 82-residue stretch at 398–479 (TPVSGNELLE…ADCPRNGLYG (82 aa)) folds into the Disintegrin domain. Cystine bridges form between cysteine 412-cysteine 427, cysteine 414-cysteine 422, cysteine 421-cysteine 444, cysteine 435-cysteine 441, cysteine 440-cysteine 465, and cysteine 453-cysteine 472. The Cell attachment site signature appears at 457–459 (RGD).

The protein belongs to the venom metalloproteinase (M12B) family. P-II subfamily. P-IIa sub-subfamily. As to quaternary structure, monomer. Zn(2+) serves as cofactor. As to expression, expressed by the venom gland.

It localises to the secreted. Impairs hemostasis in the envenomed animal. Functionally, inhibits platelet aggregation. This chain is Zinc metalloproteinase/disintegrin PMMP-1, found in Protobothrops mucrosquamatus (Taiwan habu).